A 206-amino-acid chain; its full sequence is Putative metal transport protein HI_1621 (206 aa).

6 helical membrane passes run 6–26 (GVLHTPILLAGAVLAVAGIAV), 38–58 (LTALFAAAFFVAGTIHVPVGI), 72–92 (FLGWAVFPAFLIALLLQVIFF), 94–114 (FGGFAVLGVNLCVMATPAVIA), 136–156 (IGAGVIGVGGAGALASFVLML), and 165–185 (LVWLLLVSHIPVFILDSIISV).

It belongs to the CbiM family.

The protein localises to the cell membrane. Functionally, may be involved in metal transport. The chain is Putative metal transport protein HI_1621 from Haemophilus influenzae (strain ATCC 51907 / DSM 11121 / KW20 / Rd).